An 890-amino-acid polypeptide reads, in one-letter code: uncharacterized protein (890 aa).

The signal sequence occupies residues 1 to 20 (MKILKSLVLLVLFMAMPAKA). 6 helical membrane passes run 518-538 (AALT…ALKL), 567-587 (TYFF…VVGA), 613-633 (LLFI…IITI), 651-671 (VIAF…IILM), 684-704 (ISTL…FLLI), and 775-795 (FLVL…SYGL). The interval 860–890 (KARKPEGGEHTNKFLAERNDVPKKEEGERKE) is disordered. Basic and acidic residues predominate over residues 862–890 (RKPEGGEHTNKFLAERNDVPKKEEGERKE).

The protein belongs to the TrbL/VirB6 family.

The protein localises to the cell membrane. This is an uncharacterized protein from Rickettsia felis (strain ATCC VR-1525 / URRWXCal2) (Rickettsia azadi).